We begin with the raw amino-acid sequence, 73 residues long: Conotoxin CnIIIG (73 aa).

An N-terminal signal peptide occupies residues Met-1–Ala-19. Residues Leu-20 to Asp-48 constitute a propeptide that is removed on maturation. Residue Gln-51 is modified to Pyrrolidone carboxylic acid. 3 disulfides stabilise this stretch: Cys-53/Cys-72, Cys-54/Cys-70, and Cys-60/Cys-73.

This sequence belongs to the conotoxin M superfamily. Expressed by the venom duct.

It localises to the secreted. Shows a paralytic effect in fish. The polypeptide is Conotoxin CnIIIG (Conus consors (Singed cone)).